Here is a 61-residue protein sequence, read N- to C-terminus: UPF0391 membrane protein Bpro_0066 (61 aa).

The next 2 membrane-spanning stretches (helical) occupy residues 5-25 (AIIF…GVAA) and 33-53 (ILFG…ALGV).

The protein belongs to the UPF0391 family.

The protein resides in the cell membrane. In Polaromonas sp. (strain JS666 / ATCC BAA-500), this protein is UPF0391 membrane protein Bpro_0066.